The primary structure comprises 682 residues: Methionine--tRNA ligase (682 aa).

The short motif at 15-25 (PYANGAIHLGH) is the 'HIGH' region element. Positions 146, 149, 159, and 162 each coordinate Zn(2+). The short motif at 331-335 (KMSKS) is the 'KMSKS' region element. ATP is bound at residue lysine 334. In terms of domain architecture, tRNA-binding spans 580 to 682 (DFAKLDMRVA…SGVTAGMQVK (103 aa)).

The protein belongs to the class-I aminoacyl-tRNA synthetase family. MetG type 1 subfamily. As to quaternary structure, homodimer. Requires Zn(2+) as cofactor.

Its subcellular location is the cytoplasm. The enzyme catalyses tRNA(Met) + L-methionine + ATP = L-methionyl-tRNA(Met) + AMP + diphosphate. Functionally, is required not only for elongation of protein synthesis but also for the initiation of all mRNA translation through initiator tRNA(fMet) aminoacylation. The polypeptide is Methionine--tRNA ligase (Haemophilus influenzae (strain PittEE)).